Consider the following 390-residue polypeptide: HIT domain-containing protein DDB_G0272839 (390 aa).

A disordered region spans residues 168-201; sequence DNENEKEKEKEMELDNDNTNTESIPPITSKSTST. Positions 184-201 are enriched in low complexity; the sequence is DNTNTESIPPITSKSTST. One can recognise an HIT domain in the interval 232–343; the sequence is YFCNKPESFL…ISNDYNTKYL (112 aa).

The chain is HIT domain-containing protein DDB_G0272839 from Dictyostelium discoideum (Social amoeba).